The chain runs to 242 residues: E3 ubiquitin-protein ligase ZNRF2 (242 aa).

Positions 1–141 (MGAKQSGPAA…VGGSPGGPRL (141 aa)) are disordered. The N-myristoyl glycine moiety is linked to residue Gly-2. Phosphoserine is present on residues Ser-19, Ser-21, and Ser-25. Residues 19–29 (SGSDLPSSSSG) show a composition bias toward low complexity. The span at 30 to 41 (GANGTAGGGGGA) shows a compositional bias: gly residues. Low complexity predominate over residues 59–97 (PSASGGAAAAAAAPAAPAAPRSRSLGGAVGSVASGARAA). Phosphoserine is present on residues Ser-82, Ser-89, Ser-113, Ser-116, and Ser-135. Residues 99–118 (SPFSIPNSSSGPYGSQDSVH) are compositionally biased toward polar residues. Ser-145 carries the post-translational modification Phosphoserine; by MTOR. Residues Ser-151 and Ser-193 each carry the phosphoserine modification. The segment at 199-240 (CAICLEELQQGDTIARLPCLCIYHKGCIDEWFEVNRSCPEHP) adopts an RING-type; atypical zinc-finger fold.

Interacts with UBE2N. Interacts with ZNRF1. Interacts (when phosphorylated) with YWHAE. In terms of processing, phosphorylated; leading to binding to YWHAE. Phosphorylated by MTOR at Ser-145 and dephosphorylated by PP6C. Ser-145 phosphorylation stimulates vesicle-to-cytosol translocation. Highly expressed in the brain, with higher expression during development than in adult. Expressed also in mammary glands, testis, colon and kidney.

It is found in the endosome membrane. It localises to the lysosome membrane. The protein resides in the presynaptic cell membrane. Its subcellular location is the cytoplasm. It carries out the reaction S-ubiquitinyl-[E2 ubiquitin-conjugating enzyme]-L-cysteine + [acceptor protein]-L-lysine = [E2 ubiquitin-conjugating enzyme]-L-cysteine + N(6)-ubiquitinyl-[acceptor protein]-L-lysine.. The protein operates within protein modification; protein ubiquitination. Its function is as follows. E3 ubiquitin-protein ligase that plays a role in the establishment and maintenance of neuronal transmission and plasticity. Ubiquitinates the Na(+)/K(+) ATPase alpha-1 subunit/ATP1A1 and thereby influences its endocytosis and/or degradation. Acts also as a positive regulator of mTORC1 activation by amino acids, which functions upstream of the V-ATPase and of Rag-GTPases. In turn, phosphorylation by mTOR leads to its inhibition via targeting to the cytosol allowing a self-regulating feedback mechanism. The chain is E3 ubiquitin-protein ligase ZNRF2 (ZNRF2) from Homo sapiens (Human).